The sequence spans 609 residues: UvrABC system protein C (609 aa).

Residues 15 to 93 (SSAGVYRMYD…IKQYMPKYNV (79 aa)) enclose the GIY-YIG domain. Residues 202-237 (QQVVTNLVTKMEQAAEEFHYEQAAAYRDQITALRKV) form the UVR domain.

Belongs to the UvrC family. As to quaternary structure, interacts with UvrB in an incision complex.

The protein localises to the cytoplasm. Its function is as follows. The UvrABC repair system catalyzes the recognition and processing of DNA lesions. UvrC both incises the 5' and 3' sides of the lesion. The N-terminal half is responsible for the 3' incision and the C-terminal half is responsible for the 5' incision. This chain is UvrABC system protein C, found in Shewanella denitrificans (strain OS217 / ATCC BAA-1090 / DSM 15013).